Here is a 268-residue protein sequence, read N- to C-terminus: Inositol polyphosphate multikinase (268 aa).

ATP is bound by residues lysine 27, 86 to 88, and aspartate 99; that span reads ENI. 127–135 contacts substrate; sequence TSGSLGFRI. Aspartate 235 is a binding site for ATP.

It belongs to the inositol phosphokinase (IPK) family.

Its subcellular location is the cytoplasm. The protein resides in the nucleus. The catalysed reaction is 1D-myo-inositol 1,4,5-trisphosphate + 2 ATP = 1D-myo-inositol 1,3,4,5,6-pentakisphosphate + 2 ADP + 2 H(+). The enzyme catalyses 1D-myo-inositol 1,4,5-trisphosphate + ATP = 1D-myo-inositol 1,4,5,6-tetrakisphosphate + ADP + H(+). It catalyses the reaction 1D-myo-inositol 1,4,5-trisphosphate + ATP = 1D-myo-inositol 1,3,4,5-tetrakisphosphate + ADP + H(+). It carries out the reaction 1D-myo-inositol 1,4,5,6-tetrakisphosphate + ATP = 1D-myo-inositol 1,3,4,5,6-pentakisphosphate + ADP + H(+). In terms of biological role, inositol phosphate kinase with both monophosphoinositol and diphosphoinositol polyphosphate synthase activities. Able to phosphorylate inositol 1,4,5-trisphosphate (Ins(1,4,5)P3) on both the carbon-3 and carbon-6 positions to synthesize inositol 1,3,4,5-tetrakisphosphate (Ins(1,3,4,5)P4) and inositol 1,4,5,6-tetrakisphosphate (Ins(1,4,5,6)P4), and then to subsequently phosphorylate and convert either isomer of InsP4 to inositol 1,3,4,5,6-pentakisphosphate (Ins(1,3,4,5,6)P5). Also converts (Ins(1,3,4,5,6)P5) to InsP6. Also has a role in transcription regulation. The catalytic activity is required for PHO gene repression by phosphate and for NCR gene activation in response to nitrogen availability, indicating a role for inositol pyrophosphates in these controls. Inositol polyphosphates may be involved in the regulation of chromatin remodeling of transcription. In Schizosaccharomyces pombe (strain 972 / ATCC 24843) (Fission yeast), this protein is Inositol polyphosphate multikinase (arg82).